Reading from the N-terminus, the 294-residue chain is rRNA 2'-O-methyltransferase fibrillarin (294 aa).

The segment at 1–62 (MGKDFKSGGG…GKFGAKGPRG (62 aa)) is disordered. The segment covering 20-56 (GPGGPGGRPFNKGPGGPGGPGGKFGGGRPGGPGGKFG) has biased composition (gly residues). An asymmetric dimethylarginine mark is found at Arg27, Arg47, and Arg61. Residues 151–152 (TT), 170–171 (EF), 195–196 (DA), and 215–218 (DVAQ) contribute to the S-adenosyl-L-methionine site.

Belongs to the methyltransferase superfamily. Fibrillarin family. Component of box C/D small nucleolar ribonucleoprotein (snoRNP) particles. It is associated with the U3, U8 and U13 small nuclear RNAs. By homology to other fibrillarins, some or all of the N-terminal domain arginines are modified to asymmetric dimethylarginine (DMA).

Its subcellular location is the nucleus. It is found in the nucleolus. The catalysed reaction is L-glutaminyl-[histone H2A] + S-adenosyl-L-methionine = N(5)-methyl-L-glutaminyl-[histone H2A] + S-adenosyl-L-homocysteine + H(+). S-adenosyl-L-methionine-dependent methyltransferase that has the ability to methylate both RNAs and proteins. Involved in pre-rRNA processing. Utilizes the methyl donor S-adenosyl-L-methionine to catalyze the site-specific 2'-hydroxyl methylation of ribose moieties in pre-ribosomal RNA. Site specificity is provided by a guide RNA that base pairs with the substrate. Methylation occurs at a characteristic distance from the sequence involved in base pairing with the guide RNA. Also acts as a protein methyltransferase by mediating methylation of 'Gln-105' of histone H2A (H2AQ105me), a modification that impairs binding of the FACT complex and is specifically present at 35S ribosomal DNA locus. The protein is rRNA 2'-O-methyltransferase fibrillarin (FIB) of Tetrahymena thermophila.